Reading from the N-terminus, the 449-residue chain is Tryptophan--tRNA ligase (449 aa).

ATP is bound by residues 10–12 and 18–19; these read TTT and GN. Residues 11 to 19 carry the 'HIGH' region motif; it reads TTGTPHLGN. Asp143 provides a ligand contact to L-tryptophan. Residues 155–157, Leu197, and 204–208 contribute to the ATP site; these read GRD and KMSKS. A 'KMSKS' region motif is present at residues 204–208; sequence KMSKS.

Belongs to the class-I aminoacyl-tRNA synthetase family. As to quaternary structure, homodimer.

It localises to the cytoplasm. It catalyses the reaction tRNA(Trp) + L-tryptophan + ATP = L-tryptophyl-tRNA(Trp) + AMP + diphosphate + H(+). Functionally, catalyzes the attachment of tryptophan to tRNA(Trp). The polypeptide is Tryptophan--tRNA ligase (Pseudomonas putida (strain ATCC 47054 / DSM 6125 / CFBP 8728 / NCIMB 11950 / KT2440)).